Reading from the N-terminus, the 1467-residue chain is Neuropathy target esterase sws (1467 aa).

Residues 1–34 (MDVLEMLRASASGSYNTIFSDAWCQYVSKQITAT) are Lumenal-facing. A helical membrane pass occupies residues 35–55 (MYMYCAFGLMGVLFLAWFMYF). Residues 56 to 1467 (KRLARLRLRD…RSSTYNETKN (1412 aa)) are Cytoplasmic-facing. 174–301 (IFGHFEKPIF…IRVIQVIMIR (128 aa)) provides a ligand contact to a nucleoside 3',5'-cyclic phosphate. 2 disordered regions span residues 332-353 (TMSG…ANGP) and 372-416 (MGMG…SVHG). Low complexity predominate over residues 339–350 (SQTSQSSRQATA). A phosphoserine mark is found at Ser450 and Ser459. Residues 488 to 615 (ELGL…VVRR) and 604 to 731 (IVLD…LSHR) contribute to the a nucleoside 3',5'-cyclic phosphate site. Positions 958–1124 (LVLGGGGARG…VNNLPGHLWR (167 aa)) constitute a PNPLA domain. The short motif at 962–967 (GGGARG) is the GXGXXG element. Residues 989–993 (GVSIG) carry the GXSXG motif. Ser991 serves as the catalytic Nucleophile. The active-site Proton acceptor is the Asp1111. The DGA/G motif lies at 1111–1113 (DGG). At Ser1205 the chain carries Phosphoserine. Positions 1377-1467 (RKMDKSTQST…RSSTYNETKN (91 aa)) are disordered. Over residues 1382–1393 (STQSTPPTSSRA) the composition is skewed to polar residues. 2 stretches are compositionally biased toward basic and acidic residues: residues 1396 to 1406 (RGKEEARHMDN) and 1448 to 1458 (LADKDEDKENR).

It belongs to the NTE family. As to quaternary structure, interacts with Pka-C3; interaction inhibits the catalytic function of Pka-C3 and the esterase activity of sws.

It is found in the endoplasmic reticulum membrane. It catalyses the reaction a 1-acyl-sn-glycero-3-phosphocholine + H2O = sn-glycerol 3-phosphocholine + a fatty acid + H(+). In terms of biological role, phospholipase B that deacylates intracellular phosphatidylcholine (PtdCho), generating glycerophosphocholine (GroPtdCho). This deacylation occurs at both sn-2 and sn-1 positions of PtdCho. Its specific chemical modification by certain organophosphorus (OP) compounds leads to distal axonopathy. Plays a role in the signaling mechanism between neurons and glia that regulates glia wrapping during development of the adult brain. Essential for membrane lipid homeostasis and cell survival in both neurons and glia of the adult brain. This Drosophila yakuba (Fruit fly) protein is Neuropathy target esterase sws.